Here is a 226-residue protein sequence, read N- to C-terminus: 6-carboxyhexanoate--CoA ligase (226 aa).

Belongs to the BioW family. As to quaternary structure, homodimer. Requires Mg(2+) as cofactor.

It catalyses the reaction heptanedioate + ATP + CoA = 6-carboxyhexanoyl-CoA + AMP + diphosphate. It functions in the pathway metabolic intermediate metabolism; pimeloyl-CoA biosynthesis; pimeloyl-CoA from pimelate: step 1/1. Functionally, catalyzes the transformation of pimelate into pimeloyl-CoA with concomitant hydrolysis of ATP to AMP. The sequence is that of 6-carboxyhexanoate--CoA ligase from Methanocaldococcus infernus (strain DSM 11812 / JCM 15783 / ME).